Reading from the N-terminus, the 370-residue chain is Alpha-ketoglutarate-dependent dioxygenase cnsP (370 aa).

Residues 1-12 (MSTTTVITPGTI) are compositionally biased toward low complexity. The tract at residues 1 to 20 (MSTTTVITPGTITREKNENG) is disordered. Substrate is bound at residue H131. Fe cation contacts are provided by H169 and D171. T197 is a binding site for 2-oxoglutarate. Position 321 (H321) interacts with Fe cation. R333 and R337 together coordinate 2-oxoglutarate. Residue R337 participates in substrate binding.

It belongs to the TfdA dioxygenase family. Fe(2+) serves as cofactor.

Its pathway is alkaloid biosynthesis. Functionally, alpha-ketoglutarate-dependent dioxygenase; part of the gene cluster that mediates the biosynthesis of communesins, a prominent class of indole alkaloids with great potential as pharmaceuticals. Communesins are biosynthesized by the coupling of tryptamine and aurantioclavine, two building blocks derived from L-tryptophan. The L-tryptophan decarboxylase cnsB converts L-tryptophan to tryptamine, whereas the tryptophan dimethylallyltransferase cnsF converts L-tryptophan to 4-dimethylallyl tryptophan which is further transformed to aurantioclavine by the aurantioclavine synthase cnsA, probably aided by the catalase cnsD. The cytochrome P450 monooxygenase cnsC catalyzes the heterodimeric coupling between the two different indole moieties, tryptamine and aurantioclavine, to construct vicinal quaternary stereocenters and yield the heptacyclic communesin scaffold. The O-methyltransferase cnsE then methylates the communesin scaffold to produce communesin K, the simplest characterized communesin that contains the heptacyclic core. The dioxygenase cnsJ converts communesin K into communesin I. Acylation to introduce the hexadienyl group at position N16 of communesin I by the acyltransferase cnsK leads to the production of communesin B. The hexadienyl group is produced by the highly reducing polyketide synthase cnsI, before being hydrolytically removed from cnsI by the serine hydrolase cnsH, converted into hexadienyl-CoA by the CoA ligase cnsG, and then transferred to communesin I by cnsK. Surprisingly, cnsK may also be a promiscuous acyltransferase that can tolerate a range of acyl groups, including acetyl-, propionyl-, and butyryl-CoA, which lead to communesins A, G and H respectively. The roles of the alpha-ketoglutarate-dependent dioxygenases cnsM and cnsP have still to be determined. The protein is Alpha-ketoglutarate-dependent dioxygenase cnsP of Penicillium expansum (Blue mold rot fungus).